Here is a 372-residue protein sequence, read N- to C-terminus: uncharacterized protein (372 aa).

The interval Phe-49–Glu-72 is disordered. A compositionally biased stretch (gly residues) spans Gly-55 to Ser-70.

This is an uncharacterized protein from Halorubrum lacusprofundi (strain ATCC 49239 / DSM 5036 / JCM 8891 / ACAM 34).